A 562-amino-acid chain; its full sequence is NRAMP-like transporter smf-1 (562 aa).

Topologically, residues 1–55 (MASSNNDGPIEPEAEPWRITQNDHLEQDLLEEDAESQERVDIPVDDVEKAFSFKK) are cytoplasmic. The helical transmembrane segment at 56–76 (LWAFTGPGFLMSIAYLDPGNI) threads the bilayer. At 77–83 (ESDLQSG) the chain is on the extracellular side. The chain crosses the membrane as a helical span at residues 84–104 (AQAAYKLLWVLLSAHIIGMLL). Topologically, residues 105–140 (QRMSARLGVVSGKHMAEVAYQFYPRLPRIILWLMIE) are cytoplasmic. Residues 141 to 161 (IAIVCSDMQEVIGTAIAIFLL) traverse the membrane as a helical segment. At 162–164 (SKG) the chain is on the extracellular side. The chain crosses the membrane as a helical span at residues 165-185 (FVPLYVGVFITILDTFTFLLI). Residues 186-194 (DRYGIRKLE) lie on the Cytoplasmic side of the membrane. A helical membrane pass occupies residues 195–215 (LIFGFLILTMTVSFGYEFVVV). Topologically, residues 216 to 241 (KPPIGEVISGMVVPWCAGCGKGEFMQ) are extracellular. A helical transmembrane segment spans residues 242–262 (AISVVGAVIMPHNLYLHSALV). Over 263–287 (KSRRVDRKDRRRVAEANKYFTLESA) the chain is Cytoplasmic. A helical membrane pass occupies residues 288-308 (IALFLSFFINLFVVAVFAHGL). At 309–347 (YQKTNADVREMCIARHDIPDADIFPNNTEPVEVDIYKGG) the chain is on the extracellular side. An N-linked (GlcNAc...) asparagine glycan is attached at Asn334. A helical membrane pass occupies residues 348–368 (IYLGCQFGAIAMFIWGIGIFA). At 369–398 (AGQSSTMTGTYTGQFVMEGFVKIEWPKWKR) the chain is on the cytoplasmic side. The chain crosses the membrane as a helical span at residues 399-419 (VLITRAIAITPTLVLTFYSQG). Topologically, residues 420-428 (VQNLTGMND) are extracellular. Residue Asn422 is glycosylated (N-linked (GlcNAc...) asparagine). Residues 429–449 (FLNCVQMIQLPFALIPIITFT) traverse the membrane as a helical segment. Over 450–462 (SSRKIMHDFRSSK) the chain is Cytoplasmic. The chain crosses the membrane as a helical span at residues 463-483 (VFQIFALITSALILSINVYFI). The Extracellular segment spans residues 484–496 (SDYVFSRLGSEWY). Residues 497–517 (IIMVLAPITFAYVLFVLYLAL) traverse the membrane as a helical segment. At 518–562 (YCLVSCEIIPDTVSIRGFSFNKSYENDAPWLAVDSSAVHDNAGYQ) the chain is on the cytoplasmic side.

It belongs to the NRAMP family. As to expression, expressed in dopaminergic neurons (at protein level). Expressed predominantly in anterior and posterior intestine, rectal gland cell, H-shaped excretory cell, vulva cells, proximal uterus and spermatheca in adults. Weakly expressed in hyp7 hypodermis, pharyngeal muscles and some anterior sensory, ring and posterior head neurons in adults. Expressed in the anchor cell at the larval stage.

Its subcellular location is the apical cell membrane. The protein resides in the cytoplasmic vesicle membrane. In terms of biological role, probable divalent metal ion transporter which regulates Mn(2+) uptake. This chain is NRAMP-like transporter smf-1 (smf-1), found in Caenorhabditis elegans.